The primary structure comprises 402 residues: CCA-adding enzyme (402 aa).

Glycine 32 and arginine 35 together coordinate ATP. CTP is bound by residues glycine 32 and arginine 35. Mg(2+) is bound by residues aspartate 45 and aspartate 47. Residues arginine 116, aspartate 159, arginine 162, arginine 165, and arginine 168 each contribute to the ATP site. Arginine 116, aspartate 159, arginine 162, arginine 165, and arginine 168 together coordinate CTP.

Belongs to the tRNA nucleotidyltransferase/poly(A) polymerase family. Bacterial CCA-adding enzyme type 3 subfamily. Homodimer. The cofactor is Mg(2+).

It carries out the reaction a tRNA precursor + 2 CTP + ATP = a tRNA with a 3' CCA end + 3 diphosphate. It catalyses the reaction a tRNA with a 3' CCA end + 2 CTP + ATP = a tRNA with a 3' CCACCA end + 3 diphosphate. Catalyzes the addition and repair of the essential 3'-terminal CCA sequence in tRNAs without using a nucleic acid template. Adds these three nucleotides in the order of C, C, and A to the tRNA nucleotide-73, using CTP and ATP as substrates and producing inorganic pyrophosphate. tRNA 3'-terminal CCA addition is required both for tRNA processing and repair. Also involved in tRNA surveillance by mediating tandem CCA addition to generate a CCACCA at the 3' terminus of unstable tRNAs. While stable tRNAs receive only 3'-terminal CCA, unstable tRNAs are marked with CCACCA and rapidly degraded. This chain is CCA-adding enzyme, found in Streptococcus pyogenes serotype M6 (strain ATCC BAA-946 / MGAS10394).